The primary structure comprises 421 residues: UDP-N-acetylglucosamine 1-carboxyvinyltransferase 1 (421 aa).

22-23 (KN) serves as a coordination point for phosphoenolpyruvate. Arginine 95 is a UDP-N-acetyl-alpha-D-glucosamine binding site. Cysteine 119 acts as the Proton donor in catalysis. Cysteine 119 bears the 2-(S-cysteinyl)pyruvic acid O-phosphothioketal mark. UDP-N-acetyl-alpha-D-glucosamine-binding positions include 124–128 (RPIEQ), aspartate 308, and valine 330.

Belongs to the EPSP synthase family. MurA subfamily.

The protein localises to the cytoplasm. It catalyses the reaction phosphoenolpyruvate + UDP-N-acetyl-alpha-D-glucosamine = UDP-N-acetyl-3-O-(1-carboxyvinyl)-alpha-D-glucosamine + phosphate. It functions in the pathway cell wall biogenesis; peptidoglycan biosynthesis. Cell wall formation. Adds enolpyruvyl to UDP-N-acetylglucosamine. This is UDP-N-acetylglucosamine 1-carboxyvinyltransferase 1 from Staphylococcus aureus (strain MRSA252).